We begin with the raw amino-acid sequence, 254 residues long: Ribosomal RNA small subunit methyltransferase J (254 aa).

S-adenosyl-L-methionine is bound by residues 107 to 108, 123 to 124, and Asp177; these read RD and ER.

This sequence belongs to the methyltransferase superfamily. RsmJ family.

It is found in the cytoplasm. The catalysed reaction is guanosine(1516) in 16S rRNA + S-adenosyl-L-methionine = N(2)-methylguanosine(1516) in 16S rRNA + S-adenosyl-L-homocysteine + H(+). Specifically methylates the guanosine in position 1516 of 16S rRNA. The chain is Ribosomal RNA small subunit methyltransferase J from Histophilus somni (strain 129Pt) (Haemophilus somnus).